The chain runs to 181 residues: Isopentenyl-diphosphate Delta-isomerase (181 aa).

Mn(2+)-binding residues include His25 and His32. Residues 30–164 (PLHLAFSCWL…PWAFSPWMVM (135 aa)) form the Nudix hydrolase domain. Cys67 is an active-site residue. Cys67 is a Mg(2+) binding site. Position 69 (His69) interacts with Mn(2+). Mg(2+) is bound at residue Glu87. Positions 114 and 116 each coordinate Mn(2+). Residue Glu116 is part of the active site.

Belongs to the IPP isomerase type 1 family. In terms of assembly, homodimer. It depends on Mg(2+) as a cofactor. Requires Mn(2+) as cofactor.

It is found in the cytoplasm. The catalysed reaction is isopentenyl diphosphate = dimethylallyl diphosphate. Its pathway is isoprenoid biosynthesis; dimethylallyl diphosphate biosynthesis; dimethylallyl diphosphate from isopentenyl diphosphate: step 1/1. In terms of biological role, catalyzes the 1,3-allylic rearrangement of the homoallylic substrate isopentenyl (IPP) to its highly electrophilic allylic isomer, dimethylallyl diphosphate (DMAPP). In Salmonella choleraesuis (strain SC-B67), this protein is Isopentenyl-diphosphate Delta-isomerase.